The following is a 506-amino-acid chain: Epstein-Barr nuclear antigen leader protein (506 aa).

Disordered regions lie at residues 1-470 (MGDR…PRPP) and 485-506 (FEPPTVTTQRQSVYIEEEEDED). Serine 35 is modified (phosphoserine; by host).

The protein belongs to the lymphocryptovirus EBNA-LP family. Homooligomer. Interacts with host SP100; this interaction is important for EBNA-LP coactivator activity. Interacts with host HAX1, ERR1 and HSPA2. Interacts with host PRKDC and AKAP8L; these interactions modulate the coactivator function of EBNA-LP. In terms of processing, phosphorylated by the cellular protein kinase cdc2.

The protein resides in the host nucleus. In terms of biological role, plays an important role in the establishment of B-cell immortalization by acting as an EBNA2 coactivator. This transcriptional activation preferentially enhances the expression of the major viral protein LMP1. The interaction between EBNA-LP and host SP100 correlates with coactivation of EBNA2 and the relocalization of SP100 from PML nuclear bodies into nucleoplasm. This is Epstein-Barr nuclear antigen leader protein (EBNA-LP) from Epstein-Barr virus (strain B95-8) (HHV-4).